We begin with the raw amino-acid sequence, 385 residues long: Protein delta homolog 1 (385 aa).

The first 23 residues, 1 to 23 (MIATGALLRVLLLLLAFGHSTYG), serve as a signal peptide directing secretion. EGF-like domains follow at residues 24-55 (AECD…PLCD), 53-86 (LCDK…KFCE), 88-125 (DVRA…KDCQ), 127-168 (KAGP…NFCE), 172-208 (ATNS…KTCS), and 210-247 (PVSN…PTCA). Residues 24 to 305 (AECDPPCDPQ…KSTPLLTEGQ (282 aa)) lie on the Extracellular side of the membrane. 12 disulfide bridges follow: cysteine 26/cysteine 37, cysteine 30/cysteine 43, cysteine 45/cysteine 54, cysteine 57/cysteine 68, cysteine 63/cysteine 74, cysteine 76/cysteine 85, cysteine 92/cysteine 103, cysteine 97/cysteine 113, cysteine 115/cysteine 124, cysteine 131/cysteine 144, cysteine 138/cysteine 156, and cysteine 158/cysteine 167. Serine 94 carries O-linked (GalNAc...) serine glycosylation. N-linked (GlcNAc...) asparagine glycosylation is present at asparagine 100. Asparagine 165 carries N-linked (GlcNAc...) asparagine; atypical; partial glycosylation. Asparagine 174 carries N-linked (GlcNAc...) asparagine; atypical glycosylation. Cystine bridges form between cysteine 176–cysteine 187, cysteine 181–cysteine 196, cysteine 198–cysteine 207, cysteine 214–cysteine 225, cysteine 219–cysteine 235, and cysteine 237–cysteine 246. An O-linked (GalNAc...) serine glycan is attached at serine 216. O-linked (GalNAc...) threonine glycosylation occurs at threonine 224. Threonine 258 carries an O-linked (GalNAc...) threonine glycan. A glycan (O-linked (GalNAc...) threonine; partial) is linked at threonine 267. O-linked (GalNAc...) threonine glycosylation is present at threonine 271. Asparagine 295 is a glycosylation site (N-linked (GlcNAc...) asparagine). The helical transmembrane segment at 306–329 (AICFTILGVLTSLVVLGTVAIVFL) threads the bilayer. The Cytoplasmic segment spans residues 330-385 (NKCETWVSNLRYNHTFRKKKNLLLQYNSGEELAVNIIFPEKIDMTTFNKEAGDEEI).

As to quaternary structure, monomer. Interacts with SH3RF2. N- and O-glycosylated. As to expression, highly expressed in fetal liver, placenta, adult adrenal gland, brain, testis and ovary and, to a lesser degree, in adult kidney, muscle, thymus and heart.

Its subcellular location is the membrane. It localises to the cytoplasm. In terms of biological role, may have a role in neuroendocrine differentiation. Inhibits adipocyte differentiation. The chain is Protein delta homolog 1 (Dlk1) from Mus musculus (Mouse).